Here is a 247-residue protein sequence, read N- to C-terminus: GTP cyclohydrolase 1 type 2 homolog (247 aa).

A divalent metal cation contacts are provided by H63, H64, D101, H215, and E219.

This sequence belongs to the GTP cyclohydrolase I type 2/NIF3 family. Homohexamer.

This chain is GTP cyclohydrolase 1 type 2 homolog, found in Yersinia pestis.